The following is a 156-amino-acid chain: Small ribosomal subunit protein uS7 (156 aa).

It belongs to the universal ribosomal protein uS7 family. As to quaternary structure, part of the 30S ribosomal subunit. Contacts proteins S9 and S11.

Its function is as follows. One of the primary rRNA binding proteins, it binds directly to 16S rRNA where it nucleates assembly of the head domain of the 30S subunit. Is located at the subunit interface close to the decoding center, probably blocks exit of the E-site tRNA. This Marinobacter nauticus (strain ATCC 700491 / DSM 11845 / VT8) (Marinobacter aquaeolei) protein is Small ribosomal subunit protein uS7.